Here is a 629-residue protein sequence, read N- to C-terminus: Smc-like protein Sph1 (629 aa).

2 coiled-coil regions span residues 139–282 and 318–487; these read LETE…LLDD and AETT…NQFD.

Belongs to the Sph1/Sph2 family.

It localises to the cytoplasm. In terms of biological role, may play a role in a late step of replication. In Halobacterium salinarum (strain ATCC 29341 / DSM 671 / R1), this protein is Smc-like protein Sph1 (sph1).